The sequence spans 609 residues: Mitogen-activated protein kinase kinase kinase 3 (609 aa).

Residues 1 to 202 (MPTWWGRKSC…SAVHGSRIGG (202 aa)) form a disordered region. Basic and acidic residues predominate over residues 11 to 28 (KNKDDNHRGIISTDRDIK). Composition is skewed to low complexity over residues 40 to 64 (PTRGGTPRCSREFAGASSAFSGFDS) and 90 to 108 (VSGSTSGSTSVSSVSSSGS). Residues 214–470 (WKKGKFLGSG…ASQLLEHPFL (257 aa)) enclose the Protein kinase domain. ATP is bound by residues 220–228 (LGSGTFGQV) and Lys243. The active-site Proton acceptor is the Asp339. Disordered regions lie at residues 487–511 (PRSYDGNFSLQPTREPYPGRLSHDN) and 590–609 (MEPSSFRTQTPNSPLRSRLV). A compositionally biased stretch (polar residues) spans 594–609 (SFRTQTPNSPLRSRLV).

Belongs to the protein kinase superfamily. STE Ser/Thr protein kinase family. MAP kinase kinase kinase subfamily. In terms of assembly, interacts with PBL27. In terms of tissue distribution, expressed in flower buds, roots, leaves, seedlings, stems and immature siliques. Absent of mature pollen.

The catalysed reaction is L-seryl-[protein] + ATP = O-phospho-L-seryl-[protein] + ADP + H(+). The enzyme catalyses L-threonyl-[protein] + ATP = O-phospho-L-threonyl-[protein] + ADP + H(+). This is Mitogen-activated protein kinase kinase kinase 3 from Arabidopsis thaliana (Mouse-ear cress).